The following is a 248-amino-acid chain: Cutinase (248 aa).

The first 17 residues, 1–17 (MRSLAILTTLLAGHAFA), serve as a signal peptide directing secretion. The propeptide occupies 18–28 (YPKPAPQSVNR). Residues 31–70 (WPSINEFLSELAKVMPIGDTITAACDLISDGEDAAASLFG) form a lid covering the active site of the uncomplexed enzyme region. Cystine bridges form between Cys55–Cys91 and Cys79–Cys153. Ser164 functions as the Nucleophile in the catalytic mechanism. A disulfide bridge links Cys212 with Cys219. Asp216 is a catalytic residue. The active-site Proton donor/acceptor is the His229.

The protein belongs to the cutinase family.

The protein localises to the secreted. The catalysed reaction is cutin + H2O = cutin monomers.. Its activity is regulated as follows. Weakly inhibited by n-undecyl phosphonate (C11Y4). Activity unaffected by paraoxon. Its function is as follows. Catalyzes the hydrolysis of complex carboxylic polyesters found in the cell wall of plants. Degrades cutin, a macromolecule that forms the structure of the plant cuticle. This chain is Cutinase, found in Hypocrea jecorina (strain QM6a) (Trichoderma reesei).